Reading from the N-terminus, the 500-residue chain is Proline/betaine transporter (500 aa).

Over 1 to 37 (MLKRKKVKPITLRDVTIIDDGKLRKAITAASLGNAME) the chain is Cytoplasmic. Residues 38-58 (WFDFGVYGFVAYALGKVFFPG) form a helical membrane-spanning segment. The Periplasmic segment spans residues 59–65 (ADPSVQM). A helical transmembrane segment spans residues 66–86 (VAALATFSVPFLIRPLGGLFF). Residues 87–97 (GMLGDKYGRQK) are Cytoplasmic-facing. Residues 98 to 118 (ILAITIVIMSISTFCIGLIPS) traverse the membrane as a helical segment. The Periplasmic portion of the chain corresponds to 119-121 (YDT). The chain crosses the membrane as a helical span at residues 122-142 (IGIWAPILLLICKMAQGFSVG). At 143 to 169 (GEYTGASIFVAEYSPDRKRGFMGSWLD) the chain is on the cytoplasmic side. The chain crosses the membrane as a helical span at residues 170–190 (FGSIAGFVLGAGVVVLISTIV). At 191–194 (GEAN) the chain is on the periplasmic side. Residues 195-215 (FLDWGWRIPFFIALPLGIIGL) form a helical membrane-spanning segment. Over 216–260 (YLRHALEETPAFQQHVDKLEQGDREGLQDGPKVSFKEIATKYWRS) the chain is Cytoplasmic. A helical membrane pass occupies residues 261-281 (LLTCIGLVIATNVTYYMLLTY). Residues 282–297 (MPSYLSHNLHYSEDHG) lie on the Periplasmic side of the membrane. A helical transmembrane segment spans residues 298 to 318 (VLIIIAIMIGMLFVQPVMGLL). Over 319–325 (SDRFGRR) the chain is Cytoplasmic. A helical transmembrane segment spans residues 326–346 (PFVLLGSVALFVLAIPAFILI). The Periplasmic segment spans residues 347 to 350 (NSNV). The helical transmembrane segment at 351 to 371 (IGLIFAGLLMLAVILNCFTGV) threads the bilayer. At 372–390 (MASTLPAMFPTHIRYSALA) the chain is on the cytoplasmic side. Residues 391-411 (AAFNISVLVAGLTPTLAAWLV) traverse the membrane as a helical segment. The Periplasmic portion of the chain corresponds to 412–416 (ESSQN). Residues 417–437 (LMMPAYYLMVVAVVGLITGVT) form a helical membrane-spanning segment. Over 438-500 (MKETANRPLK…LVQQHPRIDE (63 aa)) the chain is Cytoplasmic. The stretch at 453–498 (ASDIQEAKEILVEHYDNIEQKIDDIDHEIADLQAKRTRLVQQHPRI) forms a coiled coil.

It belongs to the major facilitator superfamily. Metabolite:H+ Symporter (MHS) family (TC 2.A.1.6) family.

The protein localises to the cell inner membrane. Its function is as follows. Proton symporter that senses osmotic shifts and responds by importing osmolytes such as proline, glycine betaine, stachydrine, pipecolic acid, ectoine and taurine. It is both an osmosensor and an osmoregulator which is available to participate early in the bacterial osmoregulatory response. The polypeptide is Proline/betaine transporter (proP) (Escherichia coli O157:H7).